A 232-amino-acid chain; its full sequence is Ubiquinone biosynthesis O-methyltransferase (232 aa).

Residues arginine 36, glycine 55, aspartate 76, and leucine 120 each coordinate S-adenosyl-L-methionine.

This sequence belongs to the methyltransferase superfamily. UbiG/COQ3 family.

It carries out the reaction a 3-demethylubiquinol + S-adenosyl-L-methionine = a ubiquinol + S-adenosyl-L-homocysteine + H(+). It catalyses the reaction a 3-(all-trans-polyprenyl)benzene-1,2-diol + S-adenosyl-L-methionine = a 2-methoxy-6-(all-trans-polyprenyl)phenol + S-adenosyl-L-homocysteine + H(+). It functions in the pathway cofactor biosynthesis; ubiquinone biosynthesis. Functionally, O-methyltransferase that catalyzes the 2 O-methylation steps in the ubiquinone biosynthetic pathway. The sequence is that of Ubiquinone biosynthesis O-methyltransferase from Pseudomonas savastanoi pv. phaseolicola (strain 1448A / Race 6) (Pseudomonas syringae pv. phaseolicola (strain 1448A / Race 6)).